The following is a 535-amino-acid chain: Glutamate--cysteine ligase (535 aa).

The protein belongs to the glutamate--cysteine ligase type 1 family. Type 1 subfamily.

It carries out the reaction L-cysteine + L-glutamate + ATP = gamma-L-glutamyl-L-cysteine + ADP + phosphate + H(+). It functions in the pathway sulfur metabolism; glutathione biosynthesis; glutathione from L-cysteine and L-glutamate: step 1/2. The sequence is that of Glutamate--cysteine ligase from Pseudomonas syringae pv. syringae.